The primary structure comprises 73 residues: uncharacterized protein (73 aa).

This is an uncharacterized protein from Human cytomegalovirus (strain AD169) (HHV-5).